The following is a 662-amino-acid chain: Calcium-dependent protease (662 aa).

A Peptidase S8 domain is found at 196–529 (QWHLKETTIG…YGRINALKAV (334 aa)). Catalysis depends on charge relay system residues Asp233, His270, and Ser466. Residues 535 to 662 (AQPEPVSIFT…IRSLTIELGF (128 aa)) enclose the P/Homo B domain.

This sequence belongs to the peptidase S8 family.

It is found in the cytoplasm. Degrades phycobiliproteins in vitro. Has a substrate specificity similar to that of trypsin. The polypeptide is Calcium-dependent protease (prcA) (Nostoc sp. (strain PCC 7120 / SAG 25.82 / UTEX 2576)).